Here is a 444-residue protein sequence, read N- to C-terminus: 3-isopropylmalate dehydratase large subunit (444 aa).

3 residues coordinate [4Fe-4S] cluster: cysteine 348, cysteine 408, and cysteine 411.

The protein belongs to the aconitase/IPM isomerase family. LeuC type 1 subfamily. Heterodimer of LeuC and LeuD. It depends on [4Fe-4S] cluster as a cofactor.

The catalysed reaction is (2R,3S)-3-isopropylmalate = (2S)-2-isopropylmalate. Its pathway is amino-acid biosynthesis; L-leucine biosynthesis; L-leucine from 3-methyl-2-oxobutanoate: step 2/4. Functionally, catalyzes the isomerization between 2-isopropylmalate and 3-isopropylmalate, via the formation of 2-isopropylmaleate. This Buchnera aphidicola subsp. Uroleucon ambrosiae protein is 3-isopropylmalate dehydratase large subunit.